We begin with the raw amino-acid sequence, 92 residues long: Kappa-scoloptoxin(15)-Ssd2a (92 aa).

The signal sequence occupies residues 1–20; sequence MKMVYLGLFLIITSCVISSG.

In terms of processing, contains 3 disulfide bonds. Expressed by the venom gland.

Its subcellular location is the secreted. Inhibits voltage-gated potassium channels (Kv) (IC(50)=about 10 nM), when tested on DRG neurons. The chain is Kappa-scoloptoxin(15)-Ssd2a from Scolopendra dehaani (Thai centipede).